We begin with the raw amino-acid sequence, 103 residues long: Large ribosomal subunit protein bL21 (103 aa).

It belongs to the bacterial ribosomal protein bL21 family. Part of the 50S ribosomal subunit. Contacts protein L20.

This protein binds to 23S rRNA in the presence of protein L20. This is Large ribosomal subunit protein bL21 from Acetivibrio thermocellus (strain ATCC 27405 / DSM 1237 / JCM 9322 / NBRC 103400 / NCIMB 10682 / NRRL B-4536 / VPI 7372) (Clostridium thermocellum).